The sequence spans 491 residues: PE-PGRS family protein PE_PGRS26 (491 aa).

The region spanning 1–93 is the PE domain; that stretch reads MSNVMVVPGM…VGSYAAAEAA (93 aa). Gly residues-rich tracts occupy residues 207–221 and 229–238; these read NGGT…GGGL and GGNGGGGDAG. Disordered regions lie at residues 207–238, 255–275, and 444–491; these read NGGT…GDAG, DGGA…ARGG, and AGGN…GKHG. The segment covering 444-485 has biased composition (gly residues); the sequence is AGGNGGDGGPSQGGGNPGFGGDGGTGGPGGVGVPDGIGGANG.

Belongs to the mycobacterial PE family. PGRS subfamily.

Its subcellular location is the cell surface. This is PE-PGRS family protein PE_PGRS26 from Mycobacterium tuberculosis (strain ATCC 25618 / H37Rv).